The primary structure comprises 64 residues: Putative H/ACA ribonucleoprotein complex subunit 3 (64 aa).

It belongs to the NOP10 family. As to quaternary structure, component of the small nucleolar ribonucleoprotein particles containing H/ACA-type snoRNAs (H/ACA snoRNPs).

It localises to the nucleus. The protein resides in the nucleolus. Required for ribosome biogenesis. Part of a complex which catalyzes pseudouridylation of rRNA. This involves the isomerization of uridine such that the ribose is subsequently attached to C5, instead of the normal N1. Pseudouridine ('psi') residues may serve to stabilize the conformation of rRNAs. The chain is Putative H/ACA ribonucleoprotein complex subunit 3 (nola-3) from Caenorhabditis elegans.